Consider the following 235-residue polypeptide: Phosphoribosylformylglycinamidine synthase subunit PurQ (235 aa).

The Glutamine amidotransferase type-1 domain occupies 4–234 (GILVFPGTNC…VQHLTGRVIR (231 aa)). Cys86 (nucleophile) is an active-site residue. Active-site residues include His203 and Glu205.

Part of the FGAM synthase complex composed of 1 PurL, 1 PurQ and 2 PurS subunits.

The protein localises to the cytoplasm. The enzyme catalyses N(2)-formyl-N(1)-(5-phospho-beta-D-ribosyl)glycinamide + L-glutamine + ATP + H2O = 2-formamido-N(1)-(5-O-phospho-beta-D-ribosyl)acetamidine + L-glutamate + ADP + phosphate + H(+). The catalysed reaction is L-glutamine + H2O = L-glutamate + NH4(+). It participates in purine metabolism; IMP biosynthesis via de novo pathway; 5-amino-1-(5-phospho-D-ribosyl)imidazole from N(2)-formyl-N(1)-(5-phospho-D-ribosyl)glycinamide: step 1/2. In terms of biological role, part of the phosphoribosylformylglycinamidine synthase complex involved in the purines biosynthetic pathway. Catalyzes the ATP-dependent conversion of formylglycinamide ribonucleotide (FGAR) and glutamine to yield formylglycinamidine ribonucleotide (FGAM) and glutamate. The FGAM synthase complex is composed of three subunits. PurQ produces an ammonia molecule by converting glutamine to glutamate. PurL transfers the ammonia molecule to FGAR to form FGAM in an ATP-dependent manner. PurS interacts with PurQ and PurL and is thought to assist in the transfer of the ammonia molecule from PurQ to PurL. The protein is Phosphoribosylformylglycinamidine synthase subunit PurQ of Symbiobacterium thermophilum (strain DSM 24528 / JCM 14929 / IAM 14863 / T).